Here is a 213-residue protein sequence, read N- to C-terminus: 5-methylthioribulose-1-phosphate/5-deoxyribulose-1-phosphate aldolase (213 aa).

Glu-73 (proton donor/acceptor) is an active-site residue. The Co(2+) site is built by Glu-73, His-92, His-94, and His-155.

The protein belongs to the aldolase class II family. Requires Co(2+) as cofactor.

The enzyme catalyses 5-(methylsulfanyl)-D-ribulose 1-phosphate = 2-(methylsulfanyl)acetaldehyde + dihydroxyacetone phosphate. It carries out the reaction 5-deoxy-D-ribulose 1-phosphate = dihydroxyacetone phosphate + acetaldehyde. It participates in amino-acid biosynthesis; L-methionine biosynthesis via salvage pathway. Uses 5-methylthioribulose-1-phosphate to yield 2-(methylthio)acetaldehyde and dihydroxyacetone phosphate. Can also use 5-deoxyribulose 1-phosphate to yield acetaldehyde and dihydroxyacetone phosphate. Part of a bifunctional DHAP-shunt salvage pathway for SAM by-products. This is 5-methylthioribulose-1-phosphate/5-deoxyribulose-1-phosphate aldolase from Escherichia coli O45:K1 (strain S88 / ExPEC).